The primary structure comprises 464 residues: Putative dipeptidase CPC735_014430 (464 aa).

Residues 1 to 34 (MSTMSARDNEKGSARSQPSHAAASEIENVPRPSR) form a disordered region. Residues 40–56 (GTMIKVFIICACAGIVS) form a helical membrane-spanning segment. 3 residues coordinate Zn(2+): His93, Asp95, and Glu206. A disulfide bridge connects residues Cys145 and Cys235. His233 lines the substrate pocket. Zn(2+) contacts are provided by His277 and His298. Arg309 and Asp369 together coordinate substrate. N-linked (GlcNAc...) asparagine glycosylation is present at Asn382.

Belongs to the metallo-dependent hydrolases superfamily. Peptidase M19 family. Requires Zn(2+) as cofactor.

Its subcellular location is the membrane. It carries out the reaction an L-aminoacyl-L-amino acid + H2O = 2 an L-alpha-amino acid. Functionally, hydrolyzes a wide range of dipeptides. This is Putative dipeptidase CPC735_014430 from Coccidioides posadasii (strain C735) (Valley fever fungus).